The chain runs to 314 residues: Methionyl-tRNA formyltransferase (314 aa).

113–116 (SLLP) contacts (6S)-5,6,7,8-tetrahydrofolate.

Belongs to the Fmt family.

The enzyme catalyses L-methionyl-tRNA(fMet) + (6R)-10-formyltetrahydrofolate = N-formyl-L-methionyl-tRNA(fMet) + (6S)-5,6,7,8-tetrahydrofolate + H(+). Attaches a formyl group to the free amino group of methionyl-tRNA(fMet). The formyl group appears to play a dual role in the initiator identity of N-formylmethionyl-tRNA by promoting its recognition by IF2 and preventing the misappropriation of this tRNA by the elongation apparatus. In Pseudomonas aeruginosa (strain ATCC 15692 / DSM 22644 / CIP 104116 / JCM 14847 / LMG 12228 / 1C / PRS 101 / PAO1), this protein is Methionyl-tRNA formyltransferase.